The primary structure comprises 494 residues: Inosine-5'-monophosphate dehydrogenase (494 aa).

CBS domains lie at 93-154 (IIRN…DEKI) and 158-217 (MTTN…CKDS). NAD(+) contacts are provided by residues Asp-251 and 301–303 (GIG). Positions 303 and 305 each coordinate K(+). Ser-306 provides a ligand contact to IMP. A K(+)-binding site is contributed by Cys-308. The active-site Thioimidate intermediate is the Cys-308. Residues 341 to 343 (DGG), 364 to 365 (GS), and 388 to 392 (YRGMG) each bind IMP. Residue Arg-406 is the Proton acceptor of the active site. Glu-421 serves as a coordination point for IMP. Residues Glu-475, Ser-476, and His-477 each coordinate K(+).

The protein belongs to the IMPDH/GMPR family. As to quaternary structure, homotetramer. It depends on K(+) as a cofactor.

It carries out the reaction IMP + NAD(+) + H2O = XMP + NADH + H(+). The protein operates within purine metabolism; XMP biosynthesis via de novo pathway; XMP from IMP: step 1/1. Its activity is regulated as follows. Mycophenolic acid (MPA) is a non-competitive inhibitor that prevents formation of the closed enzyme conformation by binding to the same site as the amobile flap. In contrast, mizoribine monophosphate (MZP) is a competitive inhibitor that induces the closed conformation. MPA is a potent inhibitor of mammalian IMPDHs but a poor inhibitor of the bacterial enzymes. MZP is a more potent inhibitor of bacterial IMPDH. Catalyzes the conversion of inosine 5'-phosphate (IMP) to xanthosine 5'-phosphate (XMP), the first committed and rate-limiting step in the de novo synthesis of guanine nucleotides, and therefore plays an important role in the regulation of cell growth. This Chlorobaculum tepidum (strain ATCC 49652 / DSM 12025 / NBRC 103806 / TLS) (Chlorobium tepidum) protein is Inosine-5'-monophosphate dehydrogenase.